A 203-amino-acid polypeptide reads, in one-letter code: uncharacterized protein (203 aa).

A disordered region spans residues 117–138; that stretch reads SSDPKLKQPSNCLNDQTNNDSA. A compositionally biased stretch (polar residues) spans 124–138; sequence QPSNCLNDQTNNDSA.

The protein localises to the cytoplasm. Its subcellular location is the nucleus. This is an uncharacterized protein from Schizosaccharomyces pombe (strain 972 / ATCC 24843) (Fission yeast).